A 506-amino-acid polypeptide reads, in one-letter code: Light-independent protochlorophyllide reductase subunit B (506 aa).

Asp-36 lines the [4Fe-4S] cluster pocket. The Proton donor role is filled by Asp-279. Residue 414–415 participates in substrate binding; it reads GL.

It belongs to the ChlB/BchB/BchZ family. Protochlorophyllide reductase is composed of three subunits; BchL, BchN and BchB. Forms a heterotetramer of two BchB and two BchN subunits. [4Fe-4S] cluster is required as a cofactor.

It catalyses the reaction chlorophyllide a + oxidized 2[4Fe-4S]-[ferredoxin] + 2 ADP + 2 phosphate = protochlorophyllide a + reduced 2[4Fe-4S]-[ferredoxin] + 2 ATP + 2 H2O. The protein operates within porphyrin-containing compound metabolism; bacteriochlorophyll biosynthesis (light-independent). Its function is as follows. Component of the dark-operative protochlorophyllide reductase (DPOR) that uses Mg-ATP and reduced ferredoxin to reduce ring D of protochlorophyllide (Pchlide) to form chlorophyllide a (Chlide). This reaction is light-independent. The NB-protein (BchN-BchB) is the catalytic component of the complex. In Methylobacterium sp. (strain 4-46), this protein is Light-independent protochlorophyllide reductase subunit B.